A 328-amino-acid chain; its full sequence is Glyoxylate reductase/hydroxypyruvate reductase (328 aa).

Ser-36 is modified (phosphoserine). Residue 83 to 84 (VG) participates in substrate binding. Residues 162 to 164 (GRI), 185 to 188 (RQPR), Ser-217, and Ile-243 each bind NADP(+). Substrate is bound by residues Arg-245, Asp-269, and 293–296 (HIGS). The active-site Proton donor is the His-293. An NADP(+)-binding site is contributed by Gly-295. Thr-298 carries the post-translational modification Phosphothreonine.

This sequence belongs to the D-isomer specific 2-hydroxyacid dehydrogenase family. As to quaternary structure, homodimer.

It catalyses the reaction glycolate + NADP(+) = glyoxylate + NADPH + H(+). It carries out the reaction (R)-glycerate + NAD(+) = 3-hydroxypyruvate + NADH + H(+). The enzyme catalyses (R)-glycerate + NADP(+) = 3-hydroxypyruvate + NADPH + H(+). Functionally, enzyme with hydroxy-pyruvate reductase, glyoxylate reductase and D-glycerate dehydrogenase enzymatic activities. Reduces hydroxypyruvate to D-glycerate, glyoxylate to glycolate oxidizes D-glycerate to hydroxypyruvate. This Mus musculus (Mouse) protein is Glyoxylate reductase/hydroxypyruvate reductase (Grhpr).